The sequence spans 609 residues: DNA mismatch repair protein MutL (609 aa).

The interval 364–386 is disordered; the sequence is SVNSKPTDYRPAMSPSFKSTPNT.

The protein belongs to the DNA mismatch repair MutL/HexB family.

Its function is as follows. This protein is involved in the repair of mismatches in DNA. It is required for dam-dependent methyl-directed DNA mismatch repair. May act as a 'molecular matchmaker', a protein that promotes the formation of a stable complex between two or more DNA-binding proteins in an ATP-dependent manner without itself being part of a final effector complex. The chain is DNA mismatch repair protein MutL from Rickettsia akari (strain Hartford).